Reading from the N-terminus, the 297-residue chain is uncharacterized protein (297 aa).

7 consecutive transmembrane segments (helical) span residues 14–34 (LFLM…FLKF), 55–75 (LLLG…IYFF), 81–101 (FYFG…AGAL), 110–130 (AIIL…RVAF), 135–155 (LSTL…KLLF), 163–183 (IVGA…YGSI), and 208–228 (LIMT…SKCF).

The protein localises to the cell membrane. This is an uncharacterized protein from Methanocaldococcus jannaschii (strain ATCC 43067 / DSM 2661 / JAL-1 / JCM 10045 / NBRC 100440) (Methanococcus jannaschii).